The following is a 439-amino-acid chain: 26S proteasome regulatory subunit 6A (439 aa).

Met-1 carries the post-translational modification N-acetylmethionine. Ser-9 carries the post-translational modification Phosphoserine. Residue Gly-227–Thr-234 coordinates ATP. Ser-376 carries the post-translational modification Phosphoserine.

The protein belongs to the AAA ATPase family. In terms of assembly, component of the 19S proteasome regulatory particle complex. The 26S proteasome consists of a 20S core particle (CP) and two 19S regulatory subunits (RP). The regulatory particle is made of a lid composed of 9 subunits, a base containing 6 ATPases including PSMC3 and few additional components. Interacts with PAAF1. (Microbial infection) Interacts with HIV-1 Tat. Sumoylated by UBE2I in response to MEKK1-mediated stimuli.

The protein resides in the cytoplasm. It localises to the nucleus. Component of the 26S proteasome, a multiprotein complex involved in the ATP-dependent degradation of ubiquitinated proteins. This complex plays a key role in the maintenance of protein homeostasis by removing misfolded or damaged proteins, which could impair cellular functions, and by removing proteins whose functions are no longer required. Therefore, the proteasome participates in numerous cellular processes, including cell cycle progression, apoptosis, or DNA damage repair. PSMC3 belongs to the heterohexameric ring of AAA (ATPases associated with diverse cellular activities) proteins that unfolds ubiquitinated target proteins that are concurrently translocated into a proteolytic chamber and degraded into peptides. This chain is 26S proteasome regulatory subunit 6A (PSMC3), found in Homo sapiens (Human).